The sequence spans 442 residues: Alpha-1,6-mannosyl-glycoprotein 2-beta-N-acetylglucosaminyltransferase (442 aa).

Over 1 to 9 (MRFRIYKRK) the chain is Cytoplasmic. The helical; Signal-anchor for type II membrane protein transmembrane segment at 10–29 (VLILTLVVAACGFVLWSSNG) threads the bilayer. The Lumenal portion of the chain corresponds to 30-442 (RQRKSDALGP…ELCKSYRRLQ (413 aa)). N-linked (GlcNAc...) asparagine glycans are attached at residues Asn64 and Asn81. Substrate is bound by residues 118–122 (QVHNR) and Asp149. The cysteines at positions 191 and 205 are disulfide-linked. Residue 224-228 (QTKHH) coordinates substrate. Asp256 lines the Mn(2+) pocket. An intrachain disulfide couples Cys278 to Cys281. Residue Arg293 participates in substrate binding. 3 cysteine pairs are disulfide-bonded: Cys329–Cys352, Cys334–Cys435, and Cys373–Cys381. Residue His369 coordinates Mn(2+).

The protein belongs to the glycosyltransferase 16 (GT16) protein family. As to quaternary structure, homodimer. It depends on Mn(2+) as a cofactor. As to expression, detected in liver, lung, testis, kidney, brain, spleen, thymus, uterus and intestine.

It is found in the golgi apparatus membrane. It catalyses the reaction an N(4)-{beta-D-GlcNAc-(1-&gt;2)-alpha-D-Man-(1-&gt;3)-[alpha-D-Man-(1-&gt;6)]-beta-D-Man-(1-&gt;4)-beta-D-GlcNAc-(1-&gt;4)-beta-D-GlcNAc}-L-asparaginyl-[protein] + UDP-N-acetyl-alpha-D-glucosamine = N(4)-{beta-D-GlcNAc-(1-&gt;2)-alpha-D-Man-(1-&gt;3)-[beta-D-GlcNAc-(1-&gt;2)-alpha-D-Man-(1-&gt;6)]-beta-D-Man-(1-&gt;4)-beta-D-GlcNAc-(1-&gt;4)-beta-D-GlcNAc}-L-asparaginyl-[protein] + UDP + H(+). It functions in the pathway protein modification; protein glycosylation. Functionally, plays an essential role in protein N-glycosylation. Catalyzes the transfer of N-acetylglucosamine (GlcNAc) onto the free terminal mannose moiety in the core structure of the nascent N-linked glycan chain, giving rise to the second branch in complex glycans. This Mus musculus (Mouse) protein is Alpha-1,6-mannosyl-glycoprotein 2-beta-N-acetylglucosaminyltransferase (Mgat2).